Consider the following 420-residue polypeptide: 3-oxo-tetronate kinase (420 aa).

Residues S258, 360–363, and G403 each bind ATP; that span reads GGET.

Belongs to the four-carbon acid sugar kinase family.

The catalysed reaction is 3-dehydro-L-erythronate + ATP = 3-dehydro-4-O-phospho-L-erythronate + ADP + H(+). It catalyses the reaction 3-dehydro-D-erythronate + ATP = 3-dehydro-4-O-phospho-D-erythronate + ADP + H(+). In terms of biological role, catalyzes the ATP-dependent phosphorylation of 3-oxo-tetronate to 3-oxo-tetronate 4-phosphate. The chain is 3-oxo-tetronate kinase from Salmonella typhimurium (strain LT2 / SGSC1412 / ATCC 700720).